A 102-amino-acid chain; its full sequence is Nucleoid-associated protein BCc_301 (102 aa).

Belongs to the YbaB/EbfC family. As to quaternary structure, homodimer.

Its subcellular location is the cytoplasm. It localises to the nucleoid. In terms of biological role, binds to DNA and alters its conformation. May be involved in regulation of gene expression, nucleoid organization and DNA protection. The protein is Nucleoid-associated protein BCc_301 of Buchnera aphidicola subsp. Cinara cedri (strain Cc).